The chain runs to 89 residues: Putative regulatory protein CPE1749 (89 aa).

It belongs to the RemA family.

The sequence is that of Putative regulatory protein CPE1749 from Clostridium perfringens (strain 13 / Type A).